The chain runs to 500 residues: Aldehyde dehydrogenase, mitochondrial (500 aa).

N6-acetyllysine is present on residues lysine 35, lysine 56, and lysine 142. 245 to 250 (GSTEVG) is an NAD(+) binding site. The active-site Proton acceptor is glutamate 268. Cysteine 302 (nucleophile) is an active-site residue. N6-acetyllysine is present on residues lysine 358, lysine 366, lysine 409, lysine 411, lysine 424, and lysine 434.

Belongs to the aldehyde dehydrogenase family. Homotetramer. Post-translationally, in response to mitochondrial stress, the precursor protein is ubiquitinated by the SIFI complex in the cytoplasm before mitochondrial import, leading to its degradation. Within the SIFI complex, UBR4 initiates ubiquitin chain that are further elongated or branched by KCMF1.

Its subcellular location is the mitochondrion matrix. The enzyme catalyses an aldehyde + NAD(+) + H2O = a carboxylate + NADH + 2 H(+). It functions in the pathway alcohol metabolism; ethanol degradation; acetate from ethanol: step 2/2. Required for clearance of cellular formaldehyde, a cytotoxic and carcinogenic metabolite that induces DNA damage. This is Aldehyde dehydrogenase, mitochondrial (ALDH2) from Equus caballus (Horse).